A 1980-amino-acid polypeptide reads, in one-letter code: Sodium channel protein type 8 subunit alpha (1980 aa).

2 disordered regions span residues 1–20 and 28–62; these read MAARLLAPPGPDSFKPFTPE and RIAESKLKKPPKADGSHREDDEDSKPKPNSDLEAG. Residues 1–132 are Cytoplasmic-facing; that stretch reads MAARLLAPPG…RIAIKILIHS (132 aa). Residues 28-61 are compositionally biased toward basic and acidic residues; that stretch reads RIAESKLKKPPKADGSHREDDEDSKPKPNSDLEA. The I repeat unit spans residues 114 to 442; sequence ILSPFNLIRR…KAMLEQLKKQ (329 aa). The chain crosses the membrane as a helical span at residues 133–151; it reads VFSMIIMCTILTNCVFMTF. Residues 152 to 158 are Extracellular-facing; that stretch reads SNPPDWS. A helical transmembrane segment spans residues 159-179; that stretch reads KNVEYTFTGIYTFESLVKIIA. The Cytoplasmic segment spans residues 180 to 193; that stretch reads RGFCIDGFTFLRDP. Residues 194-211 traverse the membrane as a helical segment; it reads WNWLDFSVIMMAYITEFV. Over 212–217 the chain is Extracellular; it reads NLGNVS. Asparagine 215 is a glycosylation site (N-linked (GlcNAc...) asparagine). The chain crosses the membrane as a helical span at residues 218–234; sequence ALRTFRVLRALKTISVI. Over 235-253 the chain is Cytoplasmic; that stretch reads PGLKTIVGALIQSVKKLSD. Residues 254 to 273 traverse the membrane as a helical segment; the sequence is VMILTVFCLSVFALIGLQLF. Over 274 to 355 the chain is Extracellular; it reads MGNLRNKCVV…PNYGYTSFDT (82 aa). Cysteine 281 and cysteine 333 are joined by a disulfide. N-linked (GlcNAc...) asparagine glycosylation is found at asparagine 289, asparagine 295, and asparagine 308. An N-linked (GlcNAc...) (high mannose) asparagine glycan is attached at asparagine 326. Positions 356–380 form an intramembrane region, pore-forming; that stretch reads FSWAFLALFRLMTQDYWENLYQLTL. Residue glutamate 373 coordinates Na(+). At 381 to 387 the chain is on the extracellular side; sequence RAAGKTY. A helical membrane pass occupies residues 388–408; it reads MIFFVLVIFVGSFYLVNLILA. Topologically, residues 409 to 753 are cytoplasmic; the sequence is VVAMAYEEQN…EIVNLIVMDP (345 aa). Disordered stretches follow at residues 446–530 and 568–602; these read AQAA…KAFR and FRGPGRFRDPGSENEFADDEHSTVEESEGRRDSLF. Residues 474 to 486 show a composition bias toward low complexity; the sequence is PRSSSEISKLSSK. Over residues 489–500 the composition is skewed to basic residues; it reads KERRNRRKKRKQ. Basic and acidic residues-rich tracts occupy residues 501–530 and 586–602; these read KELSEGEEKGDPEKVFKSESEDGMRRKAFR and DEHSTVEESEGRRDSLF. Phosphoserine is present on residues serine 518 and serine 520. One copy of the II repeat lies at 735–1007; that stretch reads CHPYWIKLKE…QISVIRIKKG (273 aa). A helical transmembrane segment spans residues 754–772; the sequence is FVDLAITICIVLNTLFMAM. The Extracellular portion of the chain corresponds to 773–783; the sequence is EHHPMTPQFEH. The helical transmembrane segment at 784 to 803 threads the bilayer; it reads VLAVGNLVFTGIFTAEMFLK. The Cytoplasmic segment spans residues 804-817; sequence LIAMDPYYYFQEGW. A helical transmembrane segment spans residues 818 to 837; sequence NIFDGFIVSLSLMELSLADV. Over 838-839 the chain is Extracellular; it reads EG. Residues 840–857 form a helical membrane-spanning segment; sequence LSVLRSFRLLRVFKLAKS. Residues 858 to 873 are Cytoplasmic-facing; the sequence is WPTLNMLIKIIGNSVG. The helical transmembrane segment at 874–892 threads the bilayer; sequence ALGNLTLVLAIIVFIFAVV. Topologically, residues 893–921 are extracellular; sequence GMQLFGKSYKECVCKINQDCELPRWHMHD. A disulfide bridge connects residues cysteine 906 and cysteine 912. Residues 922-942 constitute an intramembrane region (pore-forming); the sequence is FFHSFLIVFRVLCGEWIETMW. Na(+) contacts are provided by glutamate 936 and glutamate 939. The Extracellular segment spans residues 943-955; it reads DCMEVAGQAMCLI. Cysteine 944 and cysteine 953 are disulfide-bonded. A helical transmembrane segment spans residues 956–976; sequence VFMMVMVIGNLVVLNLFLALL. Over 977–1199 the chain is Cytoplasmic; sequence LSSFSADNLA…TCFLIVEHNW (223 aa). The segment at 1107-1148 is disordered; that stretch reads NLNTEDVSSESDPEGSKDKLDDTSSSEGSTIDIKPEVEEVPV. One copy of the III repeat lies at 1180-1495; that stretch reads LGKSWWILRK…KKYYNAMKKL (316 aa). Residues 1200–1217 form a helical membrane-spanning segment; the sequence is FETFIIFMILLSSGALAF. Topologically, residues 1218-1230 are extracellular; that stretch reads EDIYIEQRKTIRT. The chain crosses the membrane as a helical span at residues 1231 to 1249; that stretch reads ILEYADKVFTYIFILEMLL. The Cytoplasmic segment spans residues 1250-1263; sequence KWTAYGFVKFFTNA. Residues 1264-1282 form a helical membrane-spanning segment; the sequence is WCWLDFLIVAVSLVSLIAN. At 1283–1290 the chain is on the extracellular side; sequence ALGYSELG. The chain crosses the membrane as a helical span at residues 1291–1309; it reads AIKSLRTLRALRPLRALSR. Over 1310–1326 the chain is Cytoplasmic; it reads FEGMRVVVNALVGAIPS. The chain crosses the membrane as a helical span at residues 1327-1346; sequence IMNVLLVCLIFWLIFSIMGV. The Extracellular portion of the chain corresponds to 1347-1399; that stretch reads NLFAGKYHYCFNETSEIRFEIEDVNNKTECEKLMEGNNTEIRWKNVKINFDNV. The cysteines at positions 1356 and 1376 are disulfide-linked. Residues asparagine 1358, asparagine 1372, and asparagine 1383 are each glycosylated (N-linked (GlcNAc...) asparagine). An intramembrane region (pore-forming) is located at residues 1400–1421; the sequence is GAGYLALLQVATFKGWMDIMYA. The Extracellular segment spans residues 1422–1438; the sequence is AVDSRKPDEQPKYEDNI. Residues 1439-1460 form a helical membrane-spanning segment; that stretch reads YMYIYFVIFIIFGSFFTLNLFI. Residues 1461-1523 are Cytoplasmic-facing; sequence GVIIDNFNQQ…IVFDFVTQQA (63 aa). Serine 1497 is modified (phosphoserine; by PKC). The IV repeat unit spans residues 1504–1801; the sequence is IPRPLNKIQG…WEKFDPDATQ (298 aa). A helical transmembrane segment spans residues 1524–1541; it reads FDIVIMMLICLNMVTMMV. Residues 1542-1552 are Extracellular-facing; sequence ETDTQSKQMEN. Residues 1553–1571 form a helical membrane-spanning segment; the sequence is ILYWINLVFVIFFTCECVL. Over 1572–1583 the chain is Cytoplasmic; that stretch reads KMFALRHYYFTI. Residues 1584-1601 traverse the membrane as a helical segment; the sequence is GWNIFDFVVVILSIVGMF. At 1602-1614 the chain is on the extracellular side; that stretch reads LADIIEKYFVSPT. The helical transmembrane segment at 1615–1631 threads the bilayer; the sequence is LFRVIRLARIGRILRLI. Over 1632–1650 the chain is Cytoplasmic; sequence KGAKGIRTLLFALMMSLPA. The helical transmembrane segment at 1651–1668 threads the bilayer; sequence LFNIGLLLFLVMFIFSIF. Over 1669–1690 the chain is Extracellular; the sequence is GMSNFAYVKHEAGIDDMFNFET. Residues 1691-1713 constitute an intramembrane region (pore-forming); it reads FGNSMICLFQITTSAGWDGLLLP. Over 1714–1742 the chain is Extracellular; it reads ILNRPPDCSLDKEHPGSGFKGDCGNPSVG. Cysteine 1721 and cysteine 1736 are disulfide-bonded. The chain crosses the membrane as a helical span at residues 1743 to 1765; that stretch reads IFFFVSYIIISFLIVVNMYIAII. The Cytoplasmic segment spans residues 1766–1980; that stretch reads LENFSVATEE…RQKEVRESKC (215 aa). Residues 1895–1924 enclose the IQ domain; the sequence is EEVSAVVLQRAYRGHLARRGFICKKTTSNK. A disordered region spans residues 1922-1980; that stretch reads SNKLENGGTHREKKESTPSTASLPSYDSVTKPEKEKQQRAEEGRRERAKRQKEVRESKC. The segment covering 1938-1949 has biased composition (polar residues); the sequence is TPSTASLPSYDS. Positions 1951 to 1980 are enriched in basic and acidic residues; it reads TKPEKEKQQRAEEGRRERAKRQKEVRESKC.

The protein belongs to the sodium channel (TC 1.A.1.10) family. Nav1.6/SCN8A subfamily. The voltage-sensitive sodium channel consists of an ion-conducting pore-forming alpha subunit regulated by one or more beta-1 (SCN1B), beta-2 (SCN2B), beta-3 (SCN3B) and/or beta-4 (SCN4B) subunits. Beta-1 (SCN1B) and beta-3 (SCN3B) are non-covalently associated with alpha, while beta-2 (SCN2B) and beta-4 (SCN4B) are covalently linked by disulfide bonds. Interacts with NEDD4 and NEDD4L. Interacts with FGF13. Interacts with FGF14, GBG3, GBB2 and SCN1B. Interacts with TMEM233. Interacts with the conotoxin GVIIJ. Interacts with the spider beta/delta-theraphotoxin-Pre1a. Interacts with CALM1; the interaction modulates the inactivation rate of SCN8A. May be ubiquitinated by NEDD4L; which would promote its endocytosis. In terms of processing, phosphorylation at Ser-1497 by PKC in a highly conserved cytoplasmic loop slows inactivation of the sodium channel and reduces peak sodium currents. Expressed in the hippocampus with increased expression in epileptic tissue compared to normal adjacent tissue (at protein level). As to expression, expressed in non-neuronal tissues, such as monocytes/macrophages.

The protein localises to the cell membrane. It localises to the cell projection. The protein resides in the axon. Its subcellular location is the cytoplasmic vesicle. It is found in the podosome. It carries out the reaction Na(+)(in) = Na(+)(out). Inhibited by tetrodotoxin and, more weakly, by its metabolite 4,9-ah-tetrodotoxin. In terms of biological role, pore-forming subunit of a voltage-gated sodium channel complex assuming opened or closed conformations in response to the voltage difference across membranes and through which sodium ions selectively pass along their electrochemical gradient. Contributes to neuronal excitability by regulating action potential threshold and propagation. Functionally, more specifically expressed in non-neuronal cells, could play a role in sodium release from intracellular compartments and participate in the control of podosomes formation and macrophages adhesion and movement. This is Sodium channel protein type 8 subunit alpha from Homo sapiens (Human).